The sequence spans 55 residues: MPVTDPELVAIVQKRVLKKYVCRKCGALNPWGATKCRRCKSTNLRPKHYELGGKR.

The protein belongs to the eukaryotic ribosomal protein eL40 family.

The protein is Large ribosomal subunit protein eL40 of Ignicoccus hospitalis (strain KIN4/I / DSM 18386 / JCM 14125).